The primary structure comprises 151 residues: Caveolin-3 (151 aa).

Topologically, residues 1–83 (MMTEEHTDLE…RLLSTLLGVP (83 aa)) are cytoplasmic. Residue Lys-38 forms a Glycyl lysine isopeptide (Lys-Gly) (interchain with G-Cter in SUMO3) linkage. The interval 64–114 (TFTVSKYWCYRLLSTLLGVPLALLWGFLFACISFCHIWAVVPCIKSYLIEI) is required for interaction with DAG1. An intramembrane region (helical) is located at residues 84 to 104 (LALLWGFLFACISFCHIWAVV). Topologically, residues 105-151 (PCIKSYLIEIQCISHIYSLCIRTFCNPLFAALGQVCSNIKVVLRREG) are cytoplasmic.

It belongs to the caveolin family. In terms of assembly, homooligomer. Interacts with DYSF. Interacts with DLG1 and KCNA5; forms a ternary complex. Interacts with DAG1 (via its C-terminal); the interaction prevents binding of DAG1 with DMD. Interacts with TRIM72. Interacts with MUSK; may regulate MUSK signaling. Interacts with POPDC1. Interacts with CAVIN1, CAVIN2 and CAVIN4. In terms of processing, sumoylation with SUMO3 by PIAS4 may reduce agonist-induced internalization and desensitization of adrenergic receptor ABRD2. Expressed predominantly in muscle.

It localises to the golgi apparatus membrane. Its subcellular location is the cell membrane. The protein localises to the membrane. It is found in the caveola. The protein resides in the sarcolemma. In terms of biological role, may act as a scaffolding protein within caveolar membranes. Interacts directly with G-protein alpha subunits and can functionally regulate their activity. May also regulate voltage-gated potassium channels. Plays a role in the sarcolemma repair mechanism of both skeletal muscle and cardiomyocytes that permits rapid resealing of membranes disrupted by mechanical stress. Mediates the recruitment of CAVIN2 and CAVIN3 proteins to the caveolae. The sequence is that of Caveolin-3 from Mus musculus (Mouse).